The chain runs to 238 residues: Tetrahydromethanopterin S-methyltransferase subunit A 1 (238 aa).

At 2-218 (VEKKSPAEGW…RMFAGMYSGK (217 aa)) the chain is on the cytoplasmic side. His-84 lines the 5-hydroxybenzimidazolylcob(I)amide pocket. A helical transmembrane segment spans residues 219 to 237 (VQGIMIGLAFTLTLGILLL). Residue Val-238 is a topological domain, extracellular.

This sequence belongs to the MtrA family. The complex is composed of 8 subunits; MtrA, MtrB, MtrC, MtrD, MtrE, MtrF, MtrG and MtrH. Requires 5-hydroxybenzimidazolylcob(I)amide as cofactor.

The protein localises to the cell membrane. It catalyses the reaction 5-methyl-5,6,7,8-tetrahydromethanopterin + coenzyme M + 2 Na(+)(in) = 5,6,7,8-tetrahydromethanopterin + methyl-coenzyme M + 2 Na(+)(out). The protein operates within one-carbon metabolism; methanogenesis from CO(2); methyl-coenzyme M from 5,10-methylene-5,6,7,8-tetrahydromethanopterin: step 2/2. In terms of biological role, part of a complex that catalyzes the formation of methyl-coenzyme M and tetrahydromethanopterin from coenzyme M and methyl-tetrahydromethanopterin. This is an energy-conserving, sodium-ion translocating step. This Methanothermobacter thermautotrophicus (strain ATCC 29096 / DSM 1053 / JCM 10044 / NBRC 100330 / Delta H) (Methanobacterium thermoautotrophicum) protein is Tetrahydromethanopterin S-methyltransferase subunit A 1.